The following is a 607-amino-acid chain: Rap1 GTPase-GDP dissociation stimulator 1-A (607 aa).

ARM repeat units lie at residues 79 to 118, 170 to 211, 347 to 390, 391 to 431, and 479 to 519; these read ELMR…NICY, DSLQ…NLAE, DGNC…NLAI, PVVN…MLID, and SKDV…LIAA.

In terms of assembly, interacts with ralB. Probably interacts with the post-translationally isoprenylated (geranyl-geranylation) forms of ral proteins. Interacts with both GDP-bound and GTP-bound forms of ralA, but interaction is much stronger with ralA-GDP. In terms of tissue distribution, weakly expressed in adult tissues with highest levels found in spleen, kidney, skin and A6 cells.

The protein localises to the cytoplasm. Its subcellular location is the cytosol. It is found in the endoplasmic reticulum. The protein resides in the mitochondrion. Functionally, stimulates GDP/GTP exchange reaction of a group of small GTP-binding proteins (G proteins) including Rap1a/Rap1b, RhoA, RhoB and KRas, by stimulating the dissociation of GDP from and the subsequent binding of GTP to each small G protein. The protein is Rap1 GTPase-GDP dissociation stimulator 1-A (rap1gds1-a) of Xenopus laevis (African clawed frog).